Reading from the N-terminus, the 148-residue chain is Oleosin 16 kDa (148 aa).

The interval 1–21 (MADQHRGVIGGGGYGDRGGQE) is disordered. At A2 the chain carries N-acetylalanine. The tract at residues 2-34 (ADQHRGVIGGGGYGDRGGQEQQEKQPFMMTALK) is polar. Residues 8 to 17 (VIGGGGYGDR) show a composition bias toward gly residues. The hydrophobic stretch occupies residues 35–106 (TVTAATAGGS…AALSVFSWMY (72 aa)). The next 3 helical transmembrane spans lie at 43-63 (GSMLVLSGLILAGTVIALTVA), 66-86 (VLVIFSPVLVPAAIALALMAA), and 87-107 (GFVTSGGLGVAALSVFSWMYK).

It belongs to the oleosin family.

The protein resides in the lipid droplet. It localises to the membrane. In terms of biological role, may have a structural role to stabilize the lipid body during desiccation of the seed by preventing coalescence of the oil. Probably interacts with both lipid and phospholipid moieties of lipid bodies. May also provide recognition signals for specific lipase anchorage in lipolysis during seedling growth. The sequence is that of Oleosin 16 kDa (OLE16) from Oryza sativa subsp. japonica (Rice).